Here is a 310-residue protein sequence, read N- to C-terminus: Probable cell division protein WhiA (310 aa).

Residues 277 to 310 constitute a DNA-binding region (H-T-H motif); sequence SLKELAEQVPDGPISKSGVNHRLKKLHEIAENLR.

The protein belongs to the WhiA family.

Involved in cell division and chromosome segregation. The polypeptide is Probable cell division protein WhiA (Lactobacillus delbrueckii subsp. bulgaricus (strain ATCC BAA-365 / Lb-18)).